The primary structure comprises 282 residues: D-alanine aminotransferase (282 aa).

Residue Tyr-32 participates in substrate binding. Arg-51 is a binding site for pyridoxal 5'-phosphate. Arg-99 and His-101 together coordinate substrate. Residue Lys-146 is the Proton acceptor of the active site. Lys-146 is modified (N6-(pyridoxal phosphate)lysine). A pyridoxal 5'-phosphate-binding site is contributed by Glu-178.

The protein belongs to the class-IV pyridoxal-phosphate-dependent aminotransferase family. Homodimer. Pyridoxal 5'-phosphate is required as a cofactor.

The enzyme catalyses D-alanine + 2-oxoglutarate = D-glutamate + pyruvate. Acts on the D-isomers of alanine, leucine, aspartate, glutamate, aminobutyrate, norvaline and asparagine. The enzyme transfers an amino group from a substrate D-amino acid to the pyridoxal phosphate cofactor to form pyridoxamine and an alpha-keto acid in the first half-reaction. The second half-reaction is the reverse of the first, transferring the amino group from the pyridoxamine to a second alpha-keto acid to form the product D-amino acid via a ping-pong mechanism. This is an important process in the formation of D-alanine and D-glutamate, which are essential bacterial cell wall components. The sequence is that of D-alanine aminotransferase (dat) from Staphylococcus aureus (strain COL).